Here is a 279-residue protein sequence, read N- to C-terminus: Protease HtpX homolog (279 aa).

2 consecutive transmembrane segments (helical) span residues 4-24 (IFLF…VLAV) and 34-54 (GSLL…SLLM). Residue H140 coordinates Zn(2+). The active site involves E141. H144 serves as a coordination point for Zn(2+). A run of 2 helical transmembrane segments spans residues 155-175 (LIQG…ANLI) and 189-209 (FLVS…IVMW). Position 215 (E215) interacts with Zn(2+).

Belongs to the peptidase M48B family. Zn(2+) is required as a cofactor.

Its subcellular location is the cell inner membrane. The chain is Protease HtpX homolog from Neisseria meningitidis serogroup B (strain ATCC BAA-335 / MC58).